A 104-amino-acid polypeptide reads, in one-letter code: MPDADLSILNRVYEIILDRKQNYDERSYVCKLLNHRKGMNKILEKVGEESIETILAVRNENHEEIVSESSDLIFHLLVMLAANNVTLDEIAAELSARHESMKRD.

This sequence belongs to the PRA-PH family.

It localises to the cytoplasm. The catalysed reaction is 1-(5-phospho-beta-D-ribosyl)-ATP + H2O = 1-(5-phospho-beta-D-ribosyl)-5'-AMP + diphosphate + H(+). It functions in the pathway amino-acid biosynthesis; L-histidine biosynthesis; L-histidine from 5-phospho-alpha-D-ribose 1-diphosphate: step 2/9. The protein is Phosphoribosyl-ATP pyrophosphatase of Methanosarcina barkeri (strain Fusaro / DSM 804).